The primary structure comprises 128 residues: CD59 glycoprotein (128 aa).

A signal peptide spans 1-25 (MGIQGGSVLFGLLLILAVFCHSGHS). Positions 26–108 (LQCYSCPYST…ILENGGTTLS (83 aa)) constitute a UPAR/Ly6 domain. 5 cysteine pairs are disulfide-bonded: Cys-28–Cys-51, Cys-31–Cys-38, Cys-44–Cys-64, Cys-70–Cys-88, and Cys-89–Cys-94. Asn-43 is a glycosylation site (N-linked (GlcNAc...) asparagine). Asn-102 carries GPI-anchor amidated asparagine lipidation. Residues 103–128 (GGTTLSKKTVLLLVTPFLAAAWSLHP) constitute a propeptide, removed in mature form.

Interacts with T-cell surface antigen CD2. Post-translationally, N- and O-glycosylated.

Its subcellular location is the cell membrane. It localises to the secreted. Potent inhibitor of the complement membrane attack complex (MAC) action, which protects self-cells from damage during complement activation. Acts by binding to the beta-haipins of C8 (C8A and C8B) components of the assembling MAC, forming an intermolecular beta-sheet that prevents incorporation of the multiple copies of C9 required for complete formation of the osmolytic pore. The sequence is that of CD59 glycoprotein from Callithrix sp. (Marmoset).